Consider the following 569-residue polypeptide: MKTLDVHALHEGIQHTIEKLDKQKQQLEKLEKSVEHLAGMKDALKGKGGDAIRTFYEECHKPFLLFFGIFIDEYKKVLKQTQHAISSVESNSHGMIAEAFLSHDARHGVKHAREVTEQLTDAVNRQTSAIDHIVSLPTVNDSFFRMETEQAERLISDTLNKLFQFDGQQTQALEAAKSDFQTMKKYIDQLETMYTGPKIEITGYKSGSILKSQEEENINQIFGAINPQMKQADDSPMEMMLKKLAENEKSKVDSVVKTGDSKKVSKNIIVINGKVYNTSEHREHIKTDFSNAEVKQVVYNDTLYNVYISGNDMKLEPVVSLSDIKVDENGYVKILETAVELTGVYDLFKAATGRDPVSGEKVTGKDRVVASINSVPFAKIAKLEKLIDINKLINNGKKAKKASEVKNVAKDKGKIANDVSGSANKINSDLIKKYARDIEQRTGRELPKNQIDKLKEALRNKEYKKMSPIETAKHRTKFDKVKNKVIKEWEENTGQKWPVYKENVVSEKTGKIIRKKGDKYDAHHIIENTFGGEHEWWNMHPAKFPNEHQAGIHGTGSPANELFKGGKKK.

Residues 1–235 enclose the LXG domain; that stretch reads MKTLDVHALH…NPQMKQADDS (235 aa). The stretch at 8 to 91 forms a coiled coil; sequence ALHEGIQHTI…QHAISSVESN (84 aa). The disordered stretch occupies residues 548 to 569; it reads HQAGIHGTGSPANELFKGGKKK.

In the N-terminal section; belongs to the LXG family. In terms of assembly, probably interacts with cognate immunity protein YxxD but not with non-cognate immunity proteins. The interaction inhibits the toxic activity of YxxD.

The protein resides in the secreted. Functionally, toxic component of one of 6 LXG toxin-immunity modules in this strain. They promote kin selection, mediate competition in biofilms, and drive spatial segregation of different strains, indicating that LXG toxins may help avoid warfare between strains in biofilms. Mediates intercellular competition during biofilm formation; disruption of the operon disadvantages the bacteria, but overexpression of the cognate immunity protein restores growth in competition with wild-type. Overexpression alone in situ causes growth arrest but not cell lysis, a large decrease in chromosomal DNA content and the production of anucleate cells. No effect is seen on rRNA. Co-overexpression with cognate immunity protein YxxD does not cause growth arrest. The toxic effect is not dependent on the epsA and tapA operons which are required for biofilm formation. This Bacillus subtilis (strain 168) protein is Toxin YxiD (yxiD).